A 112-amino-acid chain; its full sequence is DNA-directed RNA polymerases I and III subunit RPAC2 (112 aa).

This sequence belongs to the archaeal Rpo11/eukaryotic RPB11/RPC19 RNA polymerase subunit family. In terms of assembly, component of the RNA polymerase I (Pol I) and RNA polymerase III (Pol III) complexes consisting of at least 13 and 17 subunits, respectively.

The protein resides in the nucleus. DNA-dependent RNA polymerase catalyzes the transcription of DNA into RNA using the four ribonucleoside triphosphates as substrates. Common core component of RNA polymerases I and III which synthesize ribosomal RNA precursors and small RNAs, such as 5S rRNA and tRNAs, respectively. The protein is DNA-directed RNA polymerases I and III subunit RPAC2 (polr1d) of Danio rerio (Zebrafish).